We begin with the raw amino-acid sequence, 283 residues long: Pantothenate synthetase (283 aa).

Residue 30–37 (MGYFHDGH) coordinates ATP. Catalysis depends on His-37, which acts as the Proton donor. Gln-61 contacts (R)-pantoate. Gln-61 is a binding site for beta-alanine. 147–150 (GSKD) is a binding site for ATP. Gln-153 lines the (R)-pantoate pocket. ATP is bound by residues Val-176 and 184-187 (MSSR).

The protein belongs to the pantothenate synthetase family. Homodimer.

It localises to the cytoplasm. It catalyses the reaction (R)-pantoate + beta-alanine + ATP = (R)-pantothenate + AMP + diphosphate + H(+). It participates in cofactor biosynthesis; (R)-pantothenate biosynthesis; (R)-pantothenate from (R)-pantoate and beta-alanine: step 1/1. Functionally, catalyzes the condensation of pantoate with beta-alanine in an ATP-dependent reaction via a pantoyl-adenylate intermediate. This chain is Pantothenate synthetase, found in Desulforapulum autotrophicum (strain ATCC 43914 / DSM 3382 / VKM B-1955 / HRM2) (Desulfobacterium autotrophicum).